Consider the following 557-residue polypeptide: Nucleoprotein (557 aa).

A binding site for the cap structure m7GTP region spans residues 54-235; it reads MRKDKRSDDD…ITKEESANNI (182 aa). The Mn(2+) site is built by D379 and E381. Zn(2+)-binding residues include E389, C496, H499, and C518. D522 serves as a coordination point for Mn(2+).

It belongs to the arenaviridae nucleocapsid protein family. As to quaternary structure, homomultimerizes to form the nucleocapsid. Binds to viral genomic RNA. Interacts with glycoprotein G2. Interacts with protein Z; this interaction probably directs the encapsidated genome to budding sites. Interacts with protein L; this interaction does not interfere with Z-L interaction. Interacts with host IKBKE (via Protein kinase domain); the interaction inhibits IKBKE kinase activity.

The protein localises to the virion. It localises to the host cytoplasm. In terms of biological role, encapsidates the genome, protecting it from nucleases. The encapsidated genomic RNA is termed the nucleocapsid (NC). Serves as template for viral transcription and replication. The increased presence of protein N in host cell does not seem to trigger the switch from transcription to replication as observed in other negative strain RNA viruses. Through the interaction with host IKBKE, strongly inhibits the phosphorylation and nuclear translocation of host IRF3, a protein involved in interferon activation pathway, leading to the inhibition of interferon-beta and IRF3-dependent promoters activation. Also encodes a functional 3'-5' exoribonuclease that degrades preferentially dsRNA substrates and thereby participates in the suppression of interferon induction. The protein is Nucleoprotein of Calomys callosus (Large vesper mouse).